The chain runs to 156 residues: Small ribosomal subunit protein uS7 (156 aa).

It belongs to the universal ribosomal protein uS7 family. In terms of assembly, part of the 30S ribosomal subunit. Contacts proteins S9 and S11.

In terms of biological role, one of the primary rRNA binding proteins, it binds directly to 16S rRNA where it nucleates assembly of the head domain of the 30S subunit. Is located at the subunit interface close to the decoding center, probably blocks exit of the E-site tRNA. The polypeptide is Small ribosomal subunit protein uS7 (Syntrophotalea carbinolica (strain DSM 2380 / NBRC 103641 / GraBd1) (Pelobacter carbinolicus)).